We begin with the raw amino-acid sequence, 143 residues long: Large ribosomal subunit protein uL15 (143 aa).

The interval 1-52 is disordered; sequence MKLNTLAPAAGSKSAPKRLGRGIGSGLGKTSGKGHKGQKARSGGYHKVGFEG. Gly residues predominate over residues 21 to 31; the sequence is RGIGSGLGKTS.

The protein belongs to the universal ribosomal protein uL15 family. As to quaternary structure, part of the 50S ribosomal subunit.

Functionally, binds to the 23S rRNA. This chain is Large ribosomal subunit protein uL15, found in Francisella tularensis subsp. mediasiatica (strain FSC147).